The sequence spans 607 residues: Glutamine--fructose-6-phosphate aminotransferase [isomerizing] (607 aa).

Cys2 functions as the Nucleophile; for GATase activity in the catalytic mechanism. The Glutamine amidotransferase type-2 domain maps to 2 to 217; it reads CGIIGIIGND…DGDWAVLTRN (216 aa). SIS domains follow at residues 283–422 and 455–597; these read IGID…ARGA and VCHD…VDQP. The active-site For Fru-6P isomerization activity is the Lys602.

In terms of assembly, homodimer.

The protein resides in the cytoplasm. The catalysed reaction is D-fructose 6-phosphate + L-glutamine = D-glucosamine 6-phosphate + L-glutamate. Its function is as follows. Catalyzes the first step in hexosamine metabolism, converting fructose-6P into glucosamine-6P using glutamine as a nitrogen source. This is Glutamine--fructose-6-phosphate aminotransferase [isomerizing] from Brucella abortus biovar 1 (strain 9-941).